The chain runs to 150 residues: 3-dehydroquinate dehydratase (150 aa).

The active-site Proton acceptor is the Y26. The substrate site is built by N77, H83, and D90. H103 serves as the catalytic Proton donor. Residues 104–105 and R114 each bind substrate; that span reads LS.

It belongs to the type-II 3-dehydroquinase family. As to quaternary structure, homododecamer.

The catalysed reaction is 3-dehydroquinate = 3-dehydroshikimate + H2O. The protein operates within metabolic intermediate biosynthesis; chorismate biosynthesis; chorismate from D-erythrose 4-phosphate and phosphoenolpyruvate: step 3/7. Its function is as follows. Catalyzes a trans-dehydration via an enolate intermediate. The sequence is that of 3-dehydroquinate dehydratase from Pseudoalteromonas translucida (strain TAC 125).